Consider the following 559-residue polypeptide: Palmitoyltransferase AKR1 (559 aa).

3 ANK repeats span residues 8 to 38 (QGFNALHLATHSSNAMLVLYLLMAGEMPVDT), 42 to 71 (LGHTSLMWAAYQGDSLSVQILLKHGARVDT), and 75 to 104 (EGFTPLHWAVVKGNRECLSKILMAGADIKA). The next 3 helical transmembrane spans lie at 148 to 168 (LMVLFPWYIALPLAVAQFLFG), 192 to 212 (TAVFQSTAFWVGFVWLRYLLG), and 217 to 237 (LLWMNIAFFVGYTSALYFFYG). A DHHC domain is found at 272–322 (HFCVSCIAQRPLRSKHCKFCNRCVAKFDHHCPWIYNCIGAKNHRAFLIFLA). Residue C302 is the S-palmitoyl cysteine intermediate of the active site. A run of 2 helical transmembrane segments spans residues 316–336 (AFLIFLALFLSSVPIYAYLSF) and 373–393 (LAFWSLFQMTWPGLLFLVQLY).

Belongs to the DHHC palmitoyltransferase family. AKR/ZDHHC17 subfamily.

The protein localises to the early endosome membrane. It localises to the golgi apparatus membrane. The catalysed reaction is L-cysteinyl-[protein] + hexadecanoyl-CoA = S-hexadecanoyl-L-cysteinyl-[protein] + CoA. Functionally, palmitoyltransferase specific for casein kinase 1. The protein is Palmitoyltransferase AKR1 of Mortierella alpina (Oleaginous fungus).